The following is a 457-amino-acid chain: MPIATINPATGETVKTFTAATDDEVDAAIARAHRRFADYRQTSFAQRARWANATADLLEAEADQAAAMMTLEMGKTLAAAKAEALKCAKGFRYYAENAEALLADEPADAAKVGASAAYGRYQPLGVILAVMPWNFPLWQAVRFAAPALMAGNVGLLKHASNVPQCALYLADVIARGGFPDGCFQTLLVSSGAVEAILRDPRVAAATLTGSEPAGQSVGAIAGNEIKPTVLELGGSDPFIVMPSADLDAAVSTAVTGRVQNNGQSCIAAKRFIVHADIYDDFVDKFVARMAALRVGDPTDPDTDVGPLATEQGRNEVAKQVEDAAAAGAVIRCGGKRLDRPGWFYPPTVITDISKDMALYTEEVFGPVASVFRAANIDEAVEIANATTFGLGSNAWTRDETEQRRFIDDIVAGQVFINGMTVSYPELPFGGVKRSGYGRELSAHGIREFCNIKTVWIA.

An NADP(+)-binding site is contributed by 209–214; it reads GSEPAG. Catalysis depends on residues E231 and C265.

It belongs to the aldehyde dehydrogenase family.

The catalysed reaction is succinate semialdehyde + NAD(+) + H2O = succinate + NADH + 2 H(+). It catalyses the reaction succinate semialdehyde + NADP(+) + H2O = succinate + NADPH + 2 H(+). Its function is as follows. Catalyzes the NADP(+)-dependent oxidation of succinate semialdehyde to succinate. It is believed to be the main source of succinate semialdehyde dehydrogenase activity in Mycobacterium. The chain is Succinate-semialdehyde dehydrogenase [NADP(+)] 1 (gabD1) from Mycobacterium bovis (strain ATCC BAA-935 / AF2122/97).